A 327-amino-acid polypeptide reads, in one-letter code: Beta-ketoacyl-[acyl-carrier-protein] synthase III (327 aa).

Active-site residues include cysteine 112 and histidine 253. The ACP-binding stretch occupies residues 254 to 258 (QANER). The active site involves asparagine 283.

This sequence belongs to the thiolase-like superfamily. FabH family. As to quaternary structure, homodimer.

The protein localises to the cytoplasm. It catalyses the reaction malonyl-[ACP] + acetyl-CoA + H(+) = 3-oxobutanoyl-[ACP] + CO2 + CoA. The protein operates within lipid metabolism; fatty acid biosynthesis. Catalyzes the condensation reaction of fatty acid synthesis by the addition to an acyl acceptor of two carbons from malonyl-ACP. Catalyzes the first condensation reaction which initiates fatty acid synthesis and may therefore play a role in governing the total rate of fatty acid production. Possesses both acetoacetyl-ACP synthase and acetyl transacylase activities. Its substrate specificity determines the biosynthesis of branched-chain and/or straight-chain of fatty acids. In Chlamydia trachomatis serovar A (strain ATCC VR-571B / DSM 19440 / HAR-13), this protein is Beta-ketoacyl-[acyl-carrier-protein] synthase III.